The primary structure comprises 74 residues: uncharacterized protein (74 aa).

A helical transmembrane segment spans residues 20 to 40 (IYSYTLLTLLVITLICYLIHI).

This sequence belongs to the asfivirus KP93L family.

It is found in the host membrane. This is an uncharacterized protein from African swine fever virus (isolate Tick/South Africa/Pretoriuskop Pr4/1996) (ASFV).